A 101-amino-acid chain; its full sequence is Protein S100-A3 (101 aa).

EF-hand domains follow at residues 12 to 47 (IVCT…TWTP) and 50 to 85 (FREC…LCLY). A Ca(2+)-binding site is contributed by Lys-26. Cys-30 and Cys-68 are disulfide-bonded. The residue at position 51 (Arg-51) is a Citrulline; by PAD3. Residues Asp-63, Asn-65, Asp-67, Glu-69, and Glu-74 each contribute to the Ca(2+) site. The Zn(2+) site is built by Cys-83, Cys-86, His-87, and Cys-93.

This sequence belongs to the S-100 family. Homodimer and homotetramer for the citrullinated form. More than half of the arginine residues undergo citrullination by PAD1 and PAD2. Arg-51 is specifically citrullinated by PAD3 and promotes tetramerization. As to expression, skin specific, specifically expressed in cuticle of pelage follicle.

The protein localises to the cytoplasm. Its function is as follows. Binds both calcium and zinc. May be involved in calcium-dependent cuticle cell differentiation, hair shaft and hair cuticular barrier formation. This Mus musculus (Mouse) protein is Protein S100-A3 (S100a3).